We begin with the raw amino-acid sequence, 284 residues long: Shikimate dehydrogenase (NADP(+)) (284 aa).

Residues 20 to 22 (SIS) and serine 67 contribute to the shikimate site. Lysine 71 acts as the Proton acceptor in catalysis. NADP(+) is bound at residue aspartate 83. Shikimate contacts are provided by asparagine 92 and aspartate 107. NADP(+)-binding positions include 129–133 (GAGGA) and isoleucine 227. Tyrosine 229 contacts shikimate. Glycine 250 contributes to the NADP(+) binding site.

The protein belongs to the shikimate dehydrogenase family. As to quaternary structure, homodimer.

The enzyme catalyses shikimate + NADP(+) = 3-dehydroshikimate + NADPH + H(+). It functions in the pathway metabolic intermediate biosynthesis; chorismate biosynthesis; chorismate from D-erythrose 4-phosphate and phosphoenolpyruvate: step 4/7. Functionally, involved in the biosynthesis of the chorismate, which leads to the biosynthesis of aromatic amino acids. Catalyzes the reversible NADPH linked reduction of 3-dehydroshikimate (DHSA) to yield shikimate (SA). The sequence is that of Shikimate dehydrogenase (NADP(+)) from Streptococcus pneumoniae serotype 2 (strain D39 / NCTC 7466).